The chain runs to 478 residues: WD repeat-containing protein AAC3 (478 aa).

2 disordered regions span residues 33-53 (HPLF…QQQQ) and 106-140 (SQIH…QYTN). Residues 106–125 (SQIHQQSQQSQLSNNLNSNS) are compositionally biased toward low complexity. A compositionally biased stretch (polar residues) spans 126 to 140 (KESTNIPKTNTQYTN). WD repeat units lie at residues 163 to 202 (GNKK…NSNN), 226 to 268 (GHDG…GTVS), 270 to 307 (NSEN…TLKI), 310 to 349 (FNGE…TTHV), 357 to 396 (GHTA…CVKT), 399 to 438 (KSTF…PIHT), and 440 to 478 (ECSG…GYHS).

It belongs to the THOC3 family.

In Dictyostelium discoideum (Social amoeba), this protein is WD repeat-containing protein AAC3 (AAC3).